The chain runs to 554 residues: MAIQHPDIQPAVNHSVQVAIAGAGPVGLMMANYLGQMGIDVLVVEKLDKLIDYPRAIGIDDEALRTMQSVGLVDNVLPHTTPWHAMRFLTPKGRCFADIQPMTDEFGWPRRNAFIQPQVDAVMLEGLSRFPNVRCLFSRELEAFSQQDDEVTLHLKTEEGQRETVKAQWLVACDGGASFVRRTLNVPFEGKTAPNQWIVVDIANDPLSTPHIYLCCDPVRPYVSAALPHAVRRFEFMVMPGETEEQLREPQNMRKLLSKVLPNPDNVELIRQRVYTHNARLAQRFRIDRVLLAGDAAHIMPVWQGQGYNSGMRDAFNLAWKLALVIQGKARDALLDTYQQERRDHAKAMIDLSVTAGNVLAPPKRWQGTLRDGVSWLLNYLPPVKRYFLEMRFKPMPQYYGGALVREGEAKHSPVGKMFIQPKVTLENGDVTLLDNAIGANFAVIGWGCNPLWGMSDEQIQQWRALGTRFIQVVPEVQIHTAQDNHDGVLRVGDTQGRLRSWFAQHNASLVVMRPDRFVAATAIPQTLGKTLNKLASVMTLTRPDADVSVEKVA.

FAD is bound by residues 17 to 46 (QVAI…VVEK) and 285 to 295 (FRIDRVLLAGD).

This sequence belongs to the PheA/TfdB FAD monooxygenase family. It depends on FAD as a cofactor.

The catalysed reaction is 3-(3-hydroxyphenyl)propanoate + NADH + O2 + H(+) = 3-(2,3-dihydroxyphenyl)propanoate + NAD(+) + H2O. It carries out the reaction (2E)-3-(3-hydroxyphenyl)prop-2-enoate + NADH + O2 + H(+) = (2E)-3-(2,3-dihydroxyphenyl)prop-2-enoate + NAD(+) + H2O. It participates in aromatic compound metabolism; 3-phenylpropanoate degradation. Its function is as follows. Catalyzes the insertion of one atom of molecular oxygen into position 2 of the phenyl ring of 3-(3-hydroxyphenyl)propionate (3-HPP) and hydroxycinnamic acid (3HCI). The chain is 3-(3-hydroxy-phenyl)propionate/3-hydroxycinnamic acid hydroxylase from Escherichia coli O17:K52:H18 (strain UMN026 / ExPEC).